A 363-amino-acid chain; its full sequence is Transcriptional regulator AacuR (363 aa).

Residues 1 to 24 (MTSLQCPPPDRTRRSLSPTGPKFR) are disordered. The segment at residues 27–54 (CKSCAASKIRCTKEKPQCARCVKRNMVC) is a DNA-binding region (zn(2)-C6 fungal-type). Positions 63–72 (RRKPGARLKH) are enriched in basic residues. The disordered stretch occupies residues 63-104 (RRKPGARLKHRESITTNAHHSPTTTTITTSRTTSSSPSASPK). Low complexity predominate over residues 76–102 (ITTNAHHSPTTTTITTSRTTSSSPSAS).

It is found in the nucleus. Transcriptional regulator; part of the gene cluster that mediates the biosynthesis of the tetrahydroxanthone dimer secalonic acid D. This is Transcriptional regulator AacuR from Aspergillus aculeatus (strain ATCC 16872 / CBS 172.66 / WB 5094).